The following is a 496-amino-acid chain: Fibronectin type III and SPRY domain-containing protein 1 (496 aa).

Positions 4–99 (QREALRKIIT…ALESSEELLE (96 aa)) form a coiled coil. Residues 105–162 (LQAMDREDFPQAAKQIKDGVTMAPAFRLSLKAKVSDNMSHLMVDFAQERQMLQALKFL) enclose the COS domain. Positions 164–268 (VPSAPVIDLA…EPVTLETPAF (105 aa)) constitute a Fibronectin type-III domain. In terms of domain architecture, B30.2/SPRY spans 268-477 (FMFRLDASTS…VTTGLQVPSS (210 aa)). The tract at residues 301–336 (KAREKDGKGRTASPINSPARGTPSPKRMPSGRGGRD) is disordered. Residues arginine 310 and arginine 320 each carry the omega-N-methylarginine modification.

Oligomerization is required for binding to microtubules.

The protein localises to the cytoplasm. The protein resides in the cytoskeleton. It is found in the microtubule organizing center. Its subcellular location is the centrosome. It localises to the nucleus. The protein localises to the cleavage furrow. May be involved in microtubule organization and stabilization. The protein is Fibronectin type III and SPRY domain-containing protein 1 (FSD1) of Macaca fascicularis (Crab-eating macaque).